We begin with the raw amino-acid sequence, 427 residues long: MKLKTNIRHLHGSIRVPGDKSISHRSIIFGSLAEGETKVYDILRGEDVLSTMQVFRDLGVEIEDKDGVITIQGVGMAGLKAPQNALNMGNSGTSIRLISGVLAGADFEVEMFGDDSLSKRPMDRVTLPLKKMGVSISGQTERDLPPLRLKGTKNLRPIHYELPIASAQVKSALMFAALQAKGESVIIEKECTRNHTEDMLKQFGGHLSVDGKKITVQGPQKLTGQKVVVPGDISSAAFWLVAGLINPNSHLVLQNVGINETRTGIIDVIRAMGGKLEVTEIDPVAKSSTLTVESSDLKGTEIGGALIPRLIDELPIIALLATQAQGVTVIKDAEELKVKETDRIQVVADALNSMGADITPTADGMIIKGKSALHGARVNTFGDHRIGMMTAIAALLVADGEVELDRAEAINTSYPSFFDDLESLIHG.

The 3-phosphoshikimate site is built by lysine 20, serine 21, and arginine 25. Residue lysine 20 participates in phosphoenolpyruvate binding. Glycine 92 and arginine 120 together coordinate phosphoenolpyruvate. 4 residues coordinate 3-phosphoshikimate: serine 166, glutamine 168, aspartate 312, and lysine 339. Position 168 (glutamine 168) interacts with phosphoenolpyruvate. Aspartate 312 serves as the catalytic Proton acceptor. Positions 343 and 385 each coordinate phosphoenolpyruvate.

Belongs to the EPSP synthase family. In terms of assembly, monomer.

The protein localises to the cytoplasm. The catalysed reaction is 3-phosphoshikimate + phosphoenolpyruvate = 5-O-(1-carboxyvinyl)-3-phosphoshikimate + phosphate. Its pathway is metabolic intermediate biosynthesis; chorismate biosynthesis; chorismate from D-erythrose 4-phosphate and phosphoenolpyruvate: step 6/7. Functionally, catalyzes the transfer of the enolpyruvyl moiety of phosphoenolpyruvate (PEP) to the 5-hydroxyl of shikimate-3-phosphate (S3P) to produce enolpyruvyl shikimate-3-phosphate and inorganic phosphate. This is 3-phosphoshikimate 1-carboxyvinyltransferase from Streptococcus pneumoniae serotype 2 (strain D39 / NCTC 7466).